A 479-amino-acid polypeptide reads, in one-letter code: Ribulose bisphosphate carboxylase large chain (479 aa).

Residues M1 to S2 constitute a propeptide that is removed on maturation. Substrate contacts are provided by N123 and T173. The active-site Proton acceptor is the K175. K177 is a binding site for substrate. Mg(2+) contacts are provided by K201, D203, and E204. K201 is modified (N6-carboxylysine). S208 carries the phosphoserine modification. H294 (proton acceptor) is an active-site residue. R295 and H327 together coordinate substrate. Position 330 is a phosphothreonine (T330). S379 provides a ligand contact to substrate.

It belongs to the RuBisCO large chain family. Type I subfamily. As to quaternary structure, heterohexadecamer of 8 large chains and 8 small chains; disulfide-linked. The disulfide link is formed within the large subunit homodimers. Requires Mg(2+) as cofactor. Post-translationally, the disulfide bond which can form in the large chain dimeric partners within the hexadecamer appears to be associated with oxidative stress and protein turnover.

It localises to the plastid. The protein localises to the chloroplast. It carries out the reaction 2 (2R)-3-phosphoglycerate + 2 H(+) = D-ribulose 1,5-bisphosphate + CO2 + H2O. The enzyme catalyses D-ribulose 1,5-bisphosphate + O2 = 2-phosphoglycolate + (2R)-3-phosphoglycerate + 2 H(+). RuBisCO catalyzes two reactions: the carboxylation of D-ribulose 1,5-bisphosphate, the primary event in carbon dioxide fixation, as well as the oxidative fragmentation of the pentose substrate in the photorespiration process. Both reactions occur simultaneously and in competition at the same active site. This chain is Ribulose bisphosphate carboxylase large chain, found in Lobularia maritima (Sweet alyssum).